We begin with the raw amino-acid sequence, 337 residues long: Casein kinase I isoform alpha-like (337 aa).

Lysine 8 is modified (N6-acetyllysine). The Protein kinase domain maps to 17–285 (YKLVRKIGSG…YLRQLFRILF (269 aa)). Residues 23–31 (IGSGSFGDV) and lysine 46 contribute to the ATP site. Aspartate 136 (proton acceptor) is an active-site residue. Residues 309-325 (AASSSGQGQQAQTQTGK) show a composition bias toward low complexity. The tract at residues 309 to 337 (AASSSGQGQQAQTQTGKQTEKNKNNVKDN) is disordered. The segment covering 326–337 (QTEKNKNNVKDN) has biased composition (basic and acidic residues).

It belongs to the protein kinase superfamily. CK1 Ser/Thr protein kinase family. Casein kinase I subfamily. As to quaternary structure, interacts with FAM83A, FAM83B, FAM83C, FAM83D, FAM83E, FAM83F, FAM83G and FAM83H (via DUF1669).

The protein localises to the cytoplasm. It catalyses the reaction L-seryl-[protein] + ATP = O-phospho-L-seryl-[protein] + ADP + H(+). The catalysed reaction is L-threonyl-[protein] + ATP = O-phospho-L-threonyl-[protein] + ADP + H(+). In terms of biological role, casein kinases are operationally defined by their preferential utilization of acidic proteins such as caseins as substrates. It can phosphorylate a large number of proteins. Participates in Wnt signaling. The chain is Casein kinase I isoform alpha-like (CSNK1A1L) from Homo sapiens (Human).